The chain runs to 377 residues: Nitric oxide reductase FlRd-NAD(+) reductase (377 aa).

It belongs to the FAD-dependent oxidoreductase family. It depends on FAD as a cofactor.

The protein resides in the cytoplasm. It carries out the reaction 2 reduced [nitric oxide reductase rubredoxin domain] + NAD(+) + H(+) = 2 oxidized [nitric oxide reductase rubredoxin domain] + NADH. The protein operates within nitrogen metabolism; nitric oxide reduction. One of at least two accessory proteins for anaerobic nitric oxide (NO) reductase. Reduces the rubredoxin moiety of NO reductase. The protein is Nitric oxide reductase FlRd-NAD(+) reductase of Salmonella paratyphi C (strain RKS4594).